Consider the following 400-residue polypeptide: Elongation factor Tu-B (400 aa).

Residues 10 to 209 (KPHVNVGTIG…VVDEYIPTPE (200 aa)) form the tr-type G domain. Residues 19 to 26 (GHVDHGKT) are G1. 19 to 26 (GHVDHGKT) serves as a coordination point for GTP. Threonine 26 serves as a coordination point for Mg(2+). The tract at residues 60-64 (GITIN) is G2. The segment at 81-84 (DCPG) is G3. GTP contacts are provided by residues 81-85 (DCPGH) and 136-139 (NKAD). The interval 136–139 (NKAD) is G4. Positions 174-176 (SAL) are G5.

This sequence belongs to the TRAFAC class translation factor GTPase superfamily. Classic translation factor GTPase family. EF-Tu/EF-1A subfamily. In terms of assembly, monomer.

Its subcellular location is the cytoplasm. It catalyses the reaction GTP + H2O = GDP + phosphate + H(+). In terms of biological role, GTP hydrolase that promotes the GTP-dependent binding of aminoacyl-tRNA to the A-site of ribosomes during protein biosynthesis. In Caldanaerobacter subterraneus subsp. tengcongensis (strain DSM 15242 / JCM 11007 / NBRC 100824 / MB4) (Thermoanaerobacter tengcongensis), this protein is Elongation factor Tu-B.